Consider the following 212-residue polypeptide: MNARVGVFGGTFDPVHHAHLRMARAFADELALDEVRLIPAGQPYHRLEGPHASAAQRLDMVKLAIAADARLAVDEREIRRARPAYTVDTLRELRAELGDAAELWFLIGGDSLAALSSWKDWRKLFRLANLAVAMRPGFDPAALPPEVFQEWQARQVSDFSNRTASGTIRPLALPPLDLSATRLRARLAADEPVDGLIDPAVLAYIRRQRLYR.

This sequence belongs to the NadD family.

It catalyses the reaction nicotinate beta-D-ribonucleotide + ATP + H(+) = deamido-NAD(+) + diphosphate. Its pathway is cofactor biosynthesis; NAD(+) biosynthesis; deamido-NAD(+) from nicotinate D-ribonucleotide: step 1/1. In terms of biological role, catalyzes the reversible adenylation of nicotinate mononucleotide (NaMN) to nicotinic acid adenine dinucleotide (NaAD). The chain is Probable nicotinate-nucleotide adenylyltransferase from Chromobacterium violaceum (strain ATCC 12472 / DSM 30191 / JCM 1249 / CCUG 213 / NBRC 12614 / NCIMB 9131 / NCTC 9757 / MK).